The sequence spans 287 residues: ATP synthase gamma chain (287 aa).

Belongs to the ATPase gamma chain family. F-type ATPases have 2 components, CF(1) - the catalytic core - and CF(0) - the membrane proton channel. CF(1) has five subunits: alpha(3), beta(3), gamma(1), delta(1), epsilon(1). CF(0) has three main subunits: a, b and c.

It is found in the cell inner membrane. In terms of biological role, produces ATP from ADP in the presence of a proton gradient across the membrane. The gamma chain is believed to be important in regulating ATPase activity and the flow of protons through the CF(0) complex. This is ATP synthase gamma chain from Parabacteroides distasonis (strain ATCC 8503 / DSM 20701 / CIP 104284 / JCM 5825 / NCTC 11152).